The sequence spans 157 residues: Crossover junction endodeoxyribonuclease RuvC (157 aa).

Residues aspartate 7, glutamate 66, and aspartate 139 contribute to the active site. 3 residues coordinate Mg(2+): aspartate 7, glutamate 66, and aspartate 139.

This sequence belongs to the RuvC family. In terms of assembly, homodimer which binds Holliday junction (HJ) DNA. The HJ becomes 2-fold symmetrical on binding to RuvC with unstacked arms; it has a different conformation from HJ DNA in complex with RuvA. In the full resolvosome a probable DNA-RuvA(4)-RuvB(12)-RuvC(2) complex forms which resolves the HJ. Mg(2+) is required as a cofactor.

It localises to the cytoplasm. It catalyses the reaction Endonucleolytic cleavage at a junction such as a reciprocal single-stranded crossover between two homologous DNA duplexes (Holliday junction).. Its function is as follows. The RuvA-RuvB-RuvC complex processes Holliday junction (HJ) DNA during genetic recombination and DNA repair. Endonuclease that resolves HJ intermediates. Cleaves cruciform DNA by making single-stranded nicks across the HJ at symmetrical positions within the homologous arms, yielding a 5'-phosphate and a 3'-hydroxyl group; requires a central core of homology in the junction. The consensus cleavage sequence is 5'-(A/T)TT(C/G)-3'. Cleavage occurs on the 3'-side of the TT dinucleotide at the point of strand exchange. HJ branch migration catalyzed by RuvA-RuvB allows RuvC to scan DNA until it finds its consensus sequence, where it cleaves and resolves the cruciform DNA. The polypeptide is Crossover junction endodeoxyribonuclease RuvC (Campylobacter concisus (strain 13826)).